A 137-amino-acid chain; its full sequence is Small ribosomal subunit protein uS11 (137 aa).

Residues 1 to 11 show a composition bias toward low complexity; it reads MAKQAKAGAAR. Residues 1–32 form a disordered region; that stretch reads MAKQAKAGAARRPQRGRRRERKNVPRGQAHVQ. A compositionally biased stretch (basic residues) spans 12-21; it reads RPQRGRRRER.

It belongs to the universal ribosomal protein uS11 family. As to quaternary structure, part of the 30S ribosomal subunit. Interacts with proteins S7 and S18. Binds to IF-3.

Functionally, located on the platform of the 30S subunit, it bridges several disparate RNA helices of the 16S rRNA. Forms part of the Shine-Dalgarno cleft in the 70S ribosome. The protein is Small ribosomal subunit protein uS11 of Herpetosiphon aurantiacus (strain ATCC 23779 / DSM 785 / 114-95).